We begin with the raw amino-acid sequence, 360 residues long: DNA replication and repair protein RecF (360 aa).

33–40 (GENGSGKT) provides a ligand contact to ATP.

The protein belongs to the RecF family.

Its subcellular location is the cytoplasm. In terms of biological role, the RecF protein is involved in DNA metabolism; it is required for DNA replication and normal SOS inducibility. RecF binds preferentially to single-stranded, linear DNA. It also seems to bind ATP. The polypeptide is DNA replication and repair protein RecF (Rickettsia massiliae (strain Mtu5)).